The following is a 576-amino-acid chain: Immunoglobulin mu heavy chain (576 aa).

Position 1 is a pyrrolidone carboxylic acid (glutamine 1). Ig-like domains lie at 1 to 97 (QVTL…TYYC), 132 to 212 (PTLF…EHVC), 236 to 334 (PKVS…QNAS), 352 to 442 (PSFA…QTIS), and 452 to 553 (PDVY…RTVD). The variable (V) domain, involved in antigen recognition stretch occupies residues 1 to 124 (QVTLTESGPA…VWGKGTTVTV (124 aa)). Intrachain disulfides connect cysteine 22-cysteine 97, cysteine 153-cysteine 212, and cysteine 259-cysteine 320. N-linked (GlcNAc...) asparagine glycans are attached at residues asparagine 74 and asparagine 170. Residues 125 to 576 (SSGSASAPTL…VMSDTAGTCY (452 aa)) form a constant (C) domain region. N-linked (GlcNAc...) asparagine glycosylation is found at asparagine 332, asparagine 395, and asparagine 402. Disulfide bonds link cysteine 367–cysteine 426 and cysteine 474–cysteine 536. Asparagine 563 carries N-linked (GlcNAc...) asparagine glycosylation.

Immunoglobulins are composed of two identical heavy chains and two identical light chains; disulfide-linked. It is found almost exclusively as a homopentamer in the serum. Membrane-bound IgM molecules are non-covalently associated with heterodimer of CD79A and CD79B.

The protein resides in the secreted. It localises to the cell membrane. Functionally, immunoglobulins, also known as antibodies, are membrane-bound or secreted glycoproteins produced by B lymphocytes. In the recognition phase of humoral immunity, the membrane-bound immunoglobulins serve as receptors which, upon binding of a specific antigen, trigger the clonal expansion and differentiation of B lymphocytes into immunoglobulins-secreting plasma cells. Secreted immunoglobulins mediate the effector phase of humoral immunity, which results in the elimination of bound antigens. The antigen binding site is formed by the variable domain of one heavy chain, together with that of its associated light chain. Thus, each immunoglobulin has two antigen binding sites with remarkable affinity for a particular antigen. The variable domains are assembled by a process called V-(D)-J rearrangement and can then be subjected to somatic hypermutations which, after exposure to antigen and selection, allow affinity maturation for a particular antigen. IgM antibodies play an important role in primary defense mechanisms. They have been shown to be involved in early recognition of external invaders like bacteria and viruses, cellular waste and modified self, as well as in recognition and elimination of precancerous and cancerous lesions. The membrane-bound form is found in the majority of normal B cells alongside with IgD. Membrane-bound IgM induces the phosphorylation of CD79A and CD79B by the Src family of protein tyrosine kinases. It may cause death of cells by apoptosis. It is also found in soluble form, which represents about 30% of the total serum immunoglobulins where it is found almost exclusively as a homopentamer. After the antigen binds to the B cell receptor, the secreted form is secreted in large amounts (, PubMed:16895553). The sequence is that of Immunoglobulin mu heavy chain from Homo sapiens (Human).